The sequence spans 52 residues: UPF0181 protein VPA0916 (52 aa).

This sequence belongs to the UPF0181 family.

The protein is UPF0181 protein VPA0916 of Vibrio parahaemolyticus serotype O3:K6 (strain RIMD 2210633).